The following is a 261-amino-acid chain: Kallikrein 1-related peptidase b16 (261 aa).

The signal sequence occupies residues 1-18 (MWFLILFLALSLGGIDAA). A propeptide spans 19 to 24 (PPVQSR) (activation peptide). Residues 25–258 (IVGGFKCEKN…FNSWIKDTMM (234 aa)) form the Peptidase S1 domain. Intrachain disulfides connect cysteine 31/cysteine 173, cysteine 50/cysteine 66, cysteine 152/cysteine 219, cysteine 184/cysteine 198, and cysteine 209/cysteine 234. The active-site Charge relay system is the histidine 65. An N-linked (GlcNAc...) asparagine glycan is attached at asparagine 102. Aspartate 120 acts as the Charge relay system in catalysis. Serine 213 (charge relay system) is an active-site residue.

This sequence belongs to the peptidase S1 family. Kallikrein subfamily.

It carries out the reaction Cleavage of the Leu-|-Leu bond in synthetic tetradecapeptide renin substrate, to produce angiotensin I, but not active on natural angiotensinogen. Also hydrolyzes Bz-Arg-p-nitroanilide.. This is Kallikrein 1-related peptidase b16 (Klk1b16) from Mus musculus (Mouse).